Reading from the N-terminus, the 371-residue chain is DNA replication and repair protein RecF (371 aa).

30-37 contacts ATP; it reads GKNGQGKT.

Belongs to the RecF family.

The protein localises to the cytoplasm. Functionally, the RecF protein is involved in DNA metabolism; it is required for DNA replication and normal SOS inducibility. RecF binds preferentially to single-stranded, linear DNA. It also seems to bind ATP. This Clostridioides difficile (strain 630) (Peptoclostridium difficile) protein is DNA replication and repair protein RecF.